The primary structure comprises 360 residues: Phospho-N-acetylmuramoyl-pentapeptide-transferase (360 aa).

The next 10 helical transmembrane spans lie at 26–46 (TILGVLTALGIALMIGPAVIQ), 73–93 (TMGGALILVAIAVSTLLWADL), 98–118 (VWVVLLVTLAFGLIGGVDDAL), 136–156 (LQVLAALAASTFLFATATDPV), 168–188 (WVFPLGLGFIALATLVIVGSS), 199–219 (GLAIMPTVLVATGLAVFAYAS), 235–255 (GVGELVIFCGAIVGAGLGFLW), 263–283 (VFMGDVGALALGAALGVVAVA), 288–308 (IVLFIMGGIFVMETVSVMIQV), and 338–358 (VIVRFWIITVVLVLIGLAMLK).

Belongs to the glycosyltransferase 4 family. MraY subfamily. It depends on Mg(2+) as a cofactor.

Its subcellular location is the cell inner membrane. It catalyses the reaction UDP-N-acetyl-alpha-D-muramoyl-L-alanyl-gamma-D-glutamyl-meso-2,6-diaminopimeloyl-D-alanyl-D-alanine + di-trans,octa-cis-undecaprenyl phosphate = di-trans,octa-cis-undecaprenyl diphospho-N-acetyl-alpha-D-muramoyl-L-alanyl-D-glutamyl-meso-2,6-diaminopimeloyl-D-alanyl-D-alanine + UMP. It functions in the pathway cell wall biogenesis; peptidoglycan biosynthesis. In terms of biological role, catalyzes the initial step of the lipid cycle reactions in the biosynthesis of the cell wall peptidoglycan: transfers peptidoglycan precursor phospho-MurNAc-pentapeptide from UDP-MurNAc-pentapeptide onto the lipid carrier undecaprenyl phosphate, yielding undecaprenyl-pyrophosphoryl-MurNAc-pentapeptide, known as lipid I. In Halorhodospira halophila (strain DSM 244 / SL1) (Ectothiorhodospira halophila (strain DSM 244 / SL1)), this protein is Phospho-N-acetylmuramoyl-pentapeptide-transferase.